The primary structure comprises 130 residues: Small ribosomal subunit protein uS11 (130 aa).

This sequence belongs to the universal ribosomal protein uS11 family. Part of the 30S ribosomal subunit. Interacts with proteins S7 and S18. Binds to IF-3.

Its function is as follows. Located on the platform of the 30S subunit, it bridges several disparate RNA helices of the 16S rRNA. Forms part of the Shine-Dalgarno cleft in the 70S ribosome. The chain is Small ribosomal subunit protein uS11 from Campylobacter jejuni subsp. jejuni serotype O:6 (strain 81116 / NCTC 11828).